The sequence spans 353 residues: 3-dehydroquinate synthase (353 aa).

NAD(+)-binding positions include 61 to 66 (DGEEAK), 119 to 120 (TT), K132, and K141. Residues E174, H238, and H254 each coordinate Zn(2+).

Belongs to the sugar phosphate cyclases superfamily. Dehydroquinate synthase family. It depends on Co(2+) as a cofactor. Zn(2+) serves as cofactor. The cofactor is NAD(+).

Its subcellular location is the cytoplasm. The catalysed reaction is 7-phospho-2-dehydro-3-deoxy-D-arabino-heptonate = 3-dehydroquinate + phosphate. The protein operates within metabolic intermediate biosynthesis; chorismate biosynthesis; chorismate from D-erythrose 4-phosphate and phosphoenolpyruvate: step 2/7. Functionally, catalyzes the conversion of 3-deoxy-D-arabino-heptulosonate 7-phosphate (DAHP) to dehydroquinate (DHQ). The polypeptide is 3-dehydroquinate synthase (Sulfolobus acidocaldarius (strain ATCC 33909 / DSM 639 / JCM 8929 / NBRC 15157 / NCIMB 11770)).